Here is a 409-residue protein sequence, read N- to C-terminus: Arginine deiminase (409 aa).

The Amidino-cysteine intermediate role is filled by Cys399.

The protein belongs to the arginine deiminase family.

The protein resides in the cytoplasm. It catalyses the reaction L-arginine + H2O = L-citrulline + NH4(+). It functions in the pathway amino-acid degradation; L-arginine degradation via ADI pathway; carbamoyl phosphate from L-arginine: step 1/2. The chain is Arginine deiminase (arcA) from Latilactobacillus sakei (Lactobacillus sakei).